We begin with the raw amino-acid sequence, 292 residues long: MNNHFKCIGIVGHPRHPTALTTHEMLYRWLCKKGYEVIVEQQIAHELQLKNVKTGTLAEIGQLADLAVVVGGDGNMLGAARTLARYDIKVIGINRGNLGFLTDLDPDNAQQQLADVLEGHYISEKRFLLEAQVCQQDCQKRISTAINEVVLHPGKVAHMIEFEVYIDEIFAFSQRSDGLIISTPTGSTAYSLSAGGPILTPSLDAITLVPMFPHTLSARPLVINSSSTIRLRFSHRRNDLEISCDSQIALPIQEGEDVLIRRCDYHLNLIHPKDYSYFNTLSTKLGWSKKLF.

D73 serves as the catalytic Proton acceptor. Residues 73-74 (DG), 147-148 (NE), H158, R175, D177, 188-193 (TAYSLS), and Q247 each bind NAD(+).

Belongs to the NAD kinase family. Requires a divalent metal cation as cofactor.

Its subcellular location is the cytoplasm. It catalyses the reaction NAD(+) + ATP = ADP + NADP(+) + H(+). Functionally, involved in the regulation of the intracellular balance of NAD and NADP, and is a key enzyme in the biosynthesis of NADP. Catalyzes specifically the phosphorylation on 2'-hydroxyl of the adenosine moiety of NAD to yield NADP. This Shigella boydii serotype 4 (strain Sb227) protein is NAD kinase.